Reading from the N-terminus, the 265-residue chain is Tryptophan synthase alpha chain (265 aa).

Catalysis depends on proton acceptor residues Glu-49 and Asp-60.

Belongs to the TrpA family. Tetramer of two alpha and two beta chains.

The catalysed reaction is (1S,2R)-1-C-(indol-3-yl)glycerol 3-phosphate + L-serine = D-glyceraldehyde 3-phosphate + L-tryptophan + H2O. The protein operates within amino-acid biosynthesis; L-tryptophan biosynthesis; L-tryptophan from chorismate: step 5/5. In terms of biological role, the alpha subunit is responsible for the aldol cleavage of indoleglycerol phosphate to indole and glyceraldehyde 3-phosphate. The chain is Tryptophan synthase alpha chain from Cupriavidus pinatubonensis (strain JMP 134 / LMG 1197) (Cupriavidus necator (strain JMP 134)).